Reading from the N-terminus, the 470-residue chain is Putative dipeptidase TSTA_079200 (470 aa).

The helical transmembrane segment at 40-60 threads the bilayer; the sequence is AWLFGLGTLGIILASVLLNPF. Residues H92 and D94 each coordinate Zn(2+). The cysteines at positions 143 and 237 are disulfide-linked. The N-linked (GlcNAc...) asparagine glycan is linked to N188. E208 lines the Zn(2+) pocket. Residue H235 participates in substrate binding. The Zn(2+) site is built by H279 and H300. R311 and D371 together coordinate substrate.

This sequence belongs to the metallo-dependent hydrolases superfamily. Peptidase M19 family. Zn(2+) is required as a cofactor.

Its subcellular location is the membrane. It carries out the reaction an L-aminoacyl-L-amino acid + H2O = 2 an L-alpha-amino acid. Its function is as follows. Hydrolyzes a wide range of dipeptides. The polypeptide is Putative dipeptidase TSTA_079200 (Talaromyces stipitatus (strain ATCC 10500 / CBS 375.48 / QM 6759 / NRRL 1006) (Penicillium stipitatum)).